The chain runs to 377 residues: Pseudouridylate synthase RPUSD4, mitochondrial (377 aa).

Residues 1–35 (MAAPLLGSPGLQVLSMSSRTGKLFTPSSRSFCSRA) constitute a mitochondrion transit peptide. D153 is an active-site residue.

Belongs to the pseudouridine synthase RluA family. As to quaternary structure, interacts with 16S mt-rRNA, mt-tRNA(Phe) and mt-tRNA(Met). Forms a regulatory protein-RNA complex, consisting of RCC1L, NGRN, RPUSD3, RPUSD4, TRUB2, FASTKD2 and 16S mt-rRNA.

It is found in the mitochondrion matrix. The protein resides in the nucleus. The protein localises to the cytoplasm. The enzyme catalyses uridine in 5S rRNA = pseudouridine in 5S rRNA. It catalyses the reaction a uridine in tRNA = a pseudouridine in tRNA. The catalysed reaction is a uridine in mRNA = a pseudouridine in mRNA. Functionally, catalyzes uridine to pseudouridine isomerization (pseudouridylation) of different mitochondrial RNA substrates. Acts on position 1397 in 16S mitochondrial ribosomal RNA (16S mt-rRNA). This modification is required for the assembly of 16S mt-rRNA into a functional mitochondrial ribosome. As a component of a functional protein-RNA module, consisting of RCC1L, NGRN, RPUSD3, RPUSD4, TRUB2, FASTKD2 and 16S mt-rRNA, controls 16S mt-rRNA abundance and is required for intra-mitochondrial translation. Acts on position 39 in mitochondrial tRNA(Phe). Also catalyzes pseudouridylation of mRNAs in nucleus: acts as a regulator of pre-mRNA splicing by mediating pseudouridylation of pre-mRNAs at locations associated with alternatively spliced regions. Pseudouridylation of pre-mRNAs near splice sites directly regulates mRNA splicing and mRNA 3'-end processing. This chain is Pseudouridylate synthase RPUSD4, mitochondrial, found in Rattus norvegicus (Rat).